The following is a 539-amino-acid chain: 3-hydroxy-3-methylglutaryl-coenzyme A reductase 1 (539 aa).

A helical membrane pass occupies residues 63-83 (FATVVCQLASVVYLLSLFAHP). Residues 84–124 (DAPATTTGDDDDGQGGSRRARPAAAEPAPMHGHGGGMMEAD) are linker. Residues 87 to 116 (ATTTGDDDDGQGGSRRARPAAAEPAPMHGH) are disordered. Low complexity predominate over residues 105 to 114 (PAAAEPAPMH). Residues 125 to 539 (DEEIVAAVAS…SSKDVAKAAS (415 aa)) form a catalytic region. Glutamate 218 serves as the catalytic Charge relay system. N-linked (GlcNAc...) asparagine glycosylation occurs at asparagine 282. Residues lysine 350 and aspartate 426 each act as charge relay system in the active site. The helical transmembrane segment at 496–516 (LATIVAGSVLAGELSLLAALA) threads the bilayer. Histidine 524 (proton donor) is an active-site residue. The N-linked (GlcNAc...) asparagine glycan is linked to asparagine 528.

Belongs to the HMG-CoA reductase family.

It is found in the endoplasmic reticulum membrane. It catalyses the reaction (R)-mevalonate + 2 NADP(+) + CoA = (3S)-3-hydroxy-3-methylglutaryl-CoA + 2 NADPH + 2 H(+). It functions in the pathway metabolic intermediate biosynthesis; (R)-mevalonate biosynthesis; (R)-mevalonate from acetyl-CoA: step 3/3. Its function is as follows. Catalyzes the synthesis of mevalonate. The specific precursor of all isoprenoid compounds present in plants. The sequence is that of 3-hydroxy-3-methylglutaryl-coenzyme A reductase 1 (HMG1) from Oryza sativa subsp. indica (Rice).